A 236-amino-acid polypeptide reads, in one-letter code: 3-deoxy-D-manno-octulosonic acid kinase (236 aa).

Asp167 is an active-site residue.

It belongs to the protein kinase superfamily. KdkA/RfaP family.

It is found in the cell inner membrane. It catalyses the reaction an alpha-Kdo-(2-&gt;6)-lipid IVA + ATP = a 4-O-phospho-alpha-Kdo-(2-&gt;6)-lipid IVA + ADP + H(+). It participates in bacterial outer membrane biogenesis; LPS core biosynthesis. Functionally, catalyzes the ATP-dependent phosphorylation of the 3-deoxy-D-manno-octulosonic acid (Kdo) residue in Kdo-lipid IV(A) at the 4-OH position. The protein is 3-deoxy-D-manno-octulosonic acid kinase of Vibrio vulnificus (strain CMCP6).